A 197-amino-acid chain; its full sequence is Protein-S-isoprenylcysteine O-methyltransferase B (197 aa).

The next 3 helical transmembrane spans lie at M16 to G36, A52 to L72, and F81 to G101. Residues H116–V119, Y124, and H129–Y132 contribute to the S-adenosyl-L-methionine site. Residues V140–W160 form a helical membrane-spanning segment. R166 lines the substrate pocket. E170 contacts S-adenosyl-L-methionine.

It belongs to the class VI-like SAM-binding methyltransferase superfamily. Isoprenylcysteine carboxyl methyltransferase family. Requires Zn(2+) as cofactor. As to expression, expressed in flowers, stems, leaves, roots and siliques. Detected in apices and vascular tissues of leaves and roots, in the stigma and in the filaments and anthers of stamen. Not found in petioles or hypocotyls.

The protein localises to the endoplasmic reticulum membrane. The enzyme catalyses [protein]-C-terminal S-[(2E,6E)-farnesyl]-L-cysteine + S-adenosyl-L-methionine = [protein]-C-terminal S-[(2E,6E)-farnesyl]-L-cysteine methyl ester + S-adenosyl-L-homocysteine. Its activity is regulated as follows. Inhibited by farnesylthioacetic acid (FTAA) and N-acetyl-S-trans, trans-farnesyl-l-cysteine (AFC). In terms of biological role, catalyzes the post-translational methylation of isoprenylated C-terminal cysteine residues, resulting in the modulation of the function of prenylated proteins. Involved in negative regulation of abscisic acid signaling. Carboxyl methylation is a reversible and potentially regulated step in the post-translational modification of prenylated proteins. This is Protein-S-isoprenylcysteine O-methyltransferase B from Arabidopsis thaliana (Mouse-ear cress).